A 266-amino-acid chain; its full sequence is Cytochrome c oxidase assembly factor 7 homolog (266 aa).

2 Sel1-like repeats span residues 32 to 64 (PEAC…DDYG) and 66 to 104 (AKSC…NLND). The span at 166–179 (AVTASSGSGTSSPP) shows a compositional bias: low complexity. A disordered region spans residues 166–187 (AVTASSGSGTSSPPAGQPPLKD). The Sel1-like 3 repeat unit spans residues 212 to 247 (MYACANLSQMYARGDGIEKNEKEAEKYKKLALEMQD).

Belongs to the hcp beta-lactamase family.

Required for locomotion. Probably involved in the regulation of formation/maintenance of motor neurons at presynaptic terminals at the neuromuscular junction. The polypeptide is Cytochrome c oxidase assembly factor 7 homolog (Drosophila melanogaster (Fruit fly)).